Here is a 271-residue protein sequence, read N- to C-terminus: Shikimate dehydrogenase (NADP(+)) (271 aa).

Shikimate is bound by residues 14–16 (SQS) and T61. Residue K65 is the Proton acceptor of the active site. The shikimate site is built by N86 and D101. NADP(+) contacts are provided by residues 125-129 (GAGGA), 148-153 (NRTHAR), and M212. Residue Y214 coordinates shikimate. Residue G236 participates in NADP(+) binding.

Belongs to the shikimate dehydrogenase family. Homodimer.

The enzyme catalyses shikimate + NADP(+) = 3-dehydroshikimate + NADPH + H(+). It participates in metabolic intermediate biosynthesis; chorismate biosynthesis; chorismate from D-erythrose 4-phosphate and phosphoenolpyruvate: step 4/7. In terms of biological role, involved in the biosynthesis of the chorismate, which leads to the biosynthesis of aromatic amino acids. Catalyzes the reversible NADPH linked reduction of 3-dehydroshikimate (DHSA) to yield shikimate (SA). In Edwardsiella ictaluri (strain 93-146), this protein is Shikimate dehydrogenase (NADP(+)).